A 132-amino-acid chain; its full sequence is MSKTLNIIWQYLRAFVLIYACLYAGIFIASLLPVTIPGSIIGMLILFVLLALQILPAKWVNPGCYVLIRYMALLFVPIGVGVMQYFDLLRAQFGPVVVSCAVSTLVVFLVVSWSSQLVHGERKVVGQKGSEE.

Helical transmembrane passes span 7–27 (IIWQYLRAFVLIYACLYAGIF), 31–51 (LLPVTIPGSIIGMLILFVLLA), 63–83 (GCYVLIRYMALLFVPIGVGVM), and 93–113 (FGPVVVSCAVSTLVVFLVVSW).

Belongs to the UPF0299 family.

It is found in the cell inner membrane. This is UPF0299 membrane protein YohJ from Shigella boydii serotype 4 (strain Sb227).